We begin with the raw amino-acid sequence, 562 residues long: 2-hydroxyisobutanoyl-CoA mutase large subunit (562 aa).

(3S)-3-hydroxybutanoyl-CoA is bound by residues 76-79 (YPTM), 86-88 (TMR), D117, 196-198 (TVQ), R235, N240, H245, and R284.

The protein belongs to the acyl-CoA mutase large subunit family. As to quaternary structure, homotetramer composed of two large substrate-binding subunits (HcmA) and two small cobalamin-binding subunits (HcmB).

It carries out the reaction 2-hydroxyisobutanoyl-CoA = (3S)-3-hydroxybutanoyl-CoA. Together with HcmB, catalyzes the isomerization of 2-hydroxyisobutyryl-CoA and 3-hydroxybutyryl-CoA. Is specific for 2-hydroxyisobutyryl-CoA and (S)-3-hydroxybutyryl-CoA, and shows only very low activity with (R)-3-hydroxybutyryl-CoA, isobutyryl-CoA and butyryl-CoA. In vitro, can isomerize pivalyl-CoA and isovaleryl-CoA, with much lower efficiency. Plays a central role in the degradation of substrates bearing a tert-butyl moiety, such as the fuel oxygenate methyl tert-butyl ether (MTBE) and its metabolites. This is 2-hydroxyisobutanoyl-CoA mutase large subunit from Aquincola tertiaricarbonis.